The primary structure comprises 100 residues: UPF0213 protein YhbQ (100 aa).

A GIY-YIG domain is found at 2–77 (TPWFLYLIRT…KQLTKRQKER (76 aa)).

The protein belongs to the UPF0213 family.

The protein is UPF0213 protein YhbQ of Escherichia coli O81 (strain ED1a).